Here is a 251-residue protein sequence, read N- to C-terminus: Ubiquinone/menaquinone biosynthesis C-methyltransferase UbiE (251 aa).

Residues threonine 74, aspartate 95, 123-124 (NA), and serine 140 each bind S-adenosyl-L-methionine.

The protein belongs to the class I-like SAM-binding methyltransferase superfamily. MenG/UbiE family.

It catalyses the reaction a 2-demethylmenaquinol + S-adenosyl-L-methionine = a menaquinol + S-adenosyl-L-homocysteine + H(+). The catalysed reaction is a 2-methoxy-6-(all-trans-polyprenyl)benzene-1,4-diol + S-adenosyl-L-methionine = a 5-methoxy-2-methyl-3-(all-trans-polyprenyl)benzene-1,4-diol + S-adenosyl-L-homocysteine + H(+). The protein operates within quinol/quinone metabolism; menaquinone biosynthesis; menaquinol from 1,4-dihydroxy-2-naphthoate: step 2/2. Its pathway is cofactor biosynthesis; ubiquinone biosynthesis. In terms of biological role, methyltransferase required for the conversion of demethylmenaquinol (DMKH2) to menaquinol (MKH2) and the conversion of 2-polyprenyl-6-methoxy-1,4-benzoquinol (DDMQH2) to 2-polyprenyl-3-methyl-6-methoxy-1,4-benzoquinol (DMQH2). This is Ubiquinone/menaquinone biosynthesis C-methyltransferase UbiE from Yersinia pestis bv. Antiqua (strain Antiqua).